We begin with the raw amino-acid sequence, 237 residues long: Ribosomal RNA small subunit methyltransferase G (237 aa).

Residues glycine 78, phenylalanine 83, 129-130 (AE), and arginine 148 each bind S-adenosyl-L-methionine.

Belongs to the methyltransferase superfamily. RNA methyltransferase RsmG family.

The protein localises to the cytoplasm. Its function is as follows. Specifically methylates the N7 position of a guanine in 16S rRNA. The protein is Ribosomal RNA small subunit methyltransferase G of Streptococcus pyogenes serotype M18 (strain MGAS8232).